The chain runs to 1160 residues: Nck-associated protein 1 homolog (1160 aa).

The protein belongs to the HEM-1/HEM-2 family. Part of a Scar/WAVE complex containing brk1, scrA, abiA, pirA and napA.

Functionally, involved in regulation of actin and microtubule organization. Involved in cell adhesion. This Dictyostelium discoideum (Social amoeba) protein is Nck-associated protein 1 homolog (napA).